A 216-amino-acid chain; its full sequence is Probable GTP-binding protein EngB (216 aa).

The EngB-type G domain maps to aspartate 21–glycine 192. GTP is bound by residues glycine 29–serine 36, glycine 56–serine 60, aspartate 75–glycine 78, threonine 142–aspartate 145, and valine 170–serine 173. Positions 36 and 58 each coordinate Mg(2+). Residues serine 195 to alanine 216 form a disordered region. A compositionally biased stretch (acidic residues) spans alanine 196 to alanine 216.

This sequence belongs to the TRAFAC class TrmE-Era-EngA-EngB-Septin-like GTPase superfamily. EngB GTPase family. Mg(2+) is required as a cofactor.

Functionally, necessary for normal cell division and for the maintenance of normal septation. In Nitratidesulfovibrio vulgaris (strain DP4) (Desulfovibrio vulgaris), this protein is Probable GTP-binding protein EngB.